Here is a 625-residue protein sequence, read N- to C-terminus: tRNA uridine 5-carboxymethylaminomethyl modification enzyme MnmG (625 aa).

FAD contacts are provided by residues 10–15 (GGGHAG), Val-122, and Ser-177. Residue 271-285 (GPRYCPSIEDKVNRF) coordinates NAD(+). FAD is bound at residue Gln-368.

It belongs to the MnmG family. As to quaternary structure, homodimer. Heterotetramer of two MnmE and two MnmG subunits. The cofactor is FAD.

It is found in the cytoplasm. NAD-binding protein involved in the addition of a carboxymethylaminomethyl (cmnm) group at the wobble position (U34) of certain tRNAs, forming tRNA-cmnm(5)s(2)U34. The polypeptide is tRNA uridine 5-carboxymethylaminomethyl modification enzyme MnmG (Wolinella succinogenes (strain ATCC 29543 / DSM 1740 / CCUG 13145 / JCM 31913 / LMG 7466 / NCTC 11488 / FDC 602W) (Vibrio succinogenes)).